A 324-amino-acid polypeptide reads, in one-letter code: UDP-N-acetylenolpyruvoylglucosamine reductase (324 aa).

Residues 36-203 enclose the FAD-binding PCMH-type domain; sequence FRAGGLAELM…THAIFEGFPE (168 aa). Residue arginine 183 is part of the active site. The Proton donor role is filled by serine 232. The active site involves glutamate 302.

The protein belongs to the MurB family. The cofactor is FAD.

The protein localises to the cytoplasm. The enzyme catalyses UDP-N-acetyl-alpha-D-muramate + NADP(+) = UDP-N-acetyl-3-O-(1-carboxyvinyl)-alpha-D-glucosamine + NADPH + H(+). Its pathway is cell wall biogenesis; peptidoglycan biosynthesis. Cell wall formation. The chain is UDP-N-acetylenolpyruvoylglucosamine reductase from Sinorhizobium fredii (strain NBRC 101917 / NGR234).